The following is a 473-amino-acid chain: MASKTYQAGVKEYRQTYWQPDYVPLDTDILACFKITPQAGVDREEAAAAVAAESSTGTWTTVWTDLLTDMDYYKGRAYRIEDVPGDDACFYAFIAYPIDLFEEGSVVNVFTSLVGNVFGFKAIRALRLEDVRFPIAYVKTCGGPPSGIQVERDKMNKYGRPLLGCTIKPKLGLSAKNYGRAVYECLRGSLDFTKDDENINSQPFMRWRDRFEFVQEATLKAEAETGERKGHYLNVTAPTPEEMYKRAEFAKEIGAPIIMHDYLAGGLCANAGLANWCRNNGMLLHVHRAMHAVLDRNPHHGIHFRVLTKILRLSGGDHLHTGTVVGKLEGDRASTLGWIDLLRESFVPEDRSRGIFFDQDWGSMPGAFAVASGGIHVWHMPALVAIFGDDSVLQFGGGTLGHPWGNAAGAHANRVALEACVQARNEGRQIEKEGREILTAAAQHSPELKIAMETWKEIKFEFDTVDKLDIAHK.

Positions 116 and 166 each coordinate substrate. Residue lysine 168 is the Proton acceptor of the active site. Lysine 170 contributes to the substrate binding site. Residues lysine 194, aspartate 196, and glutamate 197 each coordinate Mg(2+). Position 194 is an N6-carboxylysine (lysine 194). The Proton acceptor role is filled by histidine 287. Arginine 288, histidine 320, and serine 372 together coordinate substrate.

This sequence belongs to the RuBisCO large chain family. Type I subfamily. Heterohexadecamer of 8 large chains and 8 small chains. Requires Mg(2+) as cofactor.

It catalyses the reaction 2 (2R)-3-phosphoglycerate + 2 H(+) = D-ribulose 1,5-bisphosphate + CO2 + H2O. The enzyme catalyses D-ribulose 1,5-bisphosphate + O2 = 2-phosphoglycolate + (2R)-3-phosphoglycerate + 2 H(+). RuBisCO catalyzes two reactions: the carboxylation of D-ribulose 1,5-bisphosphate, the primary event in carbon dioxide fixation, as well as the oxidative fragmentation of the pentose substrate. Both reactions occur simultaneously and in competition at the same active site. The chain is Ribulose bisphosphate carboxylase large chain from Nitrosomonas sp. (strain ENI-11).